The chain runs to 596 residues: DNA mismatch repair protein MutL (596 aa).

It belongs to the DNA mismatch repair MutL/HexB family.

Functionally, this protein is involved in the repair of mismatches in DNA. It is required for dam-dependent methyl-directed DNA mismatch repair. May act as a 'molecular matchmaker', a protein that promotes the formation of a stable complex between two or more DNA-binding proteins in an ATP-dependent manner without itself being part of a final effector complex. The protein is DNA mismatch repair protein MutL of Leptospira borgpetersenii serovar Hardjo-bovis (strain JB197).